We begin with the raw amino-acid sequence, 383 residues long: MSDPLALAQALLRCPSVTPLDAGAQSVLAEALTAQGFTVTQLPFGDIANFYAKRVGPRSGPHLCFAGHTDVVPPGDAPWSVDAFAGEVHDGVLIGRGACDMKGAIASFVAACAARPDHPGTISLLITGDEEGVATDGTVRVLDWMRQAGEIPDFCVVGEPTNPGRLGEVIKIGRRGSLNATLTVRGRQGHVAYPHRADNPLPRLVAALHALTTTRLDDGMEGFEPSSLQLTTVDVGNPATNVIPEQAQARLNIRFNPLHRGDDLARWLRGIVQDHAPDAVIDIAISGEAFVTDPDRDPRPGASHGIAALRMAIQRITGLSPRLDTGGGTSDARFITHLCPVVEFGLVGATMHQRDEAVAVRDLQDLTGIYEALLDFYLGKDSA.

Histidine 68 provides a ligand contact to Zn(2+). Aspartate 70 is a catalytic residue. Aspartate 100 contacts Zn(2+). Glutamate 130 acts as the Proton acceptor in catalysis. Residues glutamate 131, glutamate 159, and histidine 352 each contribute to the Zn(2+) site.

The protein belongs to the peptidase M20A family. DapE subfamily. As to quaternary structure, homodimer. Zn(2+) serves as cofactor. Requires Co(2+) as cofactor.

The catalysed reaction is N-succinyl-(2S,6S)-2,6-diaminopimelate + H2O = (2S,6S)-2,6-diaminopimelate + succinate. Its pathway is amino-acid biosynthesis; L-lysine biosynthesis via DAP pathway; LL-2,6-diaminopimelate from (S)-tetrahydrodipicolinate (succinylase route): step 3/3. Catalyzes the hydrolysis of N-succinyl-L,L-diaminopimelic acid (SDAP), forming succinate and LL-2,6-diaminopimelate (DAP), an intermediate involved in the bacterial biosynthesis of lysine and meso-diaminopimelic acid, an essential component of bacterial cell walls. This chain is Succinyl-diaminopimelate desuccinylase, found in Granulibacter bethesdensis (strain ATCC BAA-1260 / CGDNIH1).